Consider the following 144-residue polypeptide: Large ribosomal subunit protein uL13 (144 aa).

This sequence belongs to the universal ribosomal protein uL13 family. As to quaternary structure, part of the 50S ribosomal subunit.

Functionally, this protein is one of the early assembly proteins of the 50S ribosomal subunit, although it is not seen to bind rRNA by itself. It is important during the early stages of 50S assembly. The polypeptide is Large ribosomal subunit protein uL13 (Oleidesulfovibrio alaskensis (strain ATCC BAA-1058 / DSM 17464 / G20) (Desulfovibrio alaskensis)).